Consider the following 459-residue polypeptide: Vasoactive intestinal polypeptide receptor 1 (459 aa).

The N-terminal stretch at 1–30 (MRPPSPPHVRWLCVLAGALACALRPAGSQA) is a signal peptide. Residues 31–142 (ASPQHECEYL…EQQQTKFYNT (112 aa)) lie on the Extracellular side of the membrane. 5 disulfide bridges follow: C37–C209, C50–C72, C63–C105, C86–C122, and C216–C286. N-linked (GlcNAc...) asparagine glycosylation is found at N58, N69, and N100. Residues 143 to 167 (VKTGYTIGYSLSLASLLVAMAILSL) traverse the membrane as a helical segment. Topologically, residues 168 to 175 (FRKLHCTR) are cytoplasmic. The helical transmembrane segment at 176–197 (NYIHMHLFMSFILRATAVFIKD) threads the bilayer. Topologically, residues 198–217 (MALFNSGEIDHCSEASVGCK) are extracellular. A helical transmembrane segment spans residues 218–242 (AAVVFFQYCVMANFFWLLVEGLYLY). Topologically, residues 243 to 255 (TLLAVSFFSERKY) are cytoplasmic. A helical membrane pass occupies residues 256-277 (FWGYILIGWGVPSVFITIWTVV). Topologically, residues 278 to 293 (RIYFEDFGCWDTIINS) are extracellular. A glycan (N-linked (GlcNAc...) asparagine) is linked at N292. The helical transmembrane segment at 294 to 318 (SLWWIIKAPILLSILVNFVLFICII) threads the bilayer. The Cytoplasmic portion of the chain corresponds to 319–340 (RILVQKLRPPDIGKNDSSPYSR). Residues 341–361 (LAKSTLLLIPLFGIHYVMFAF) form a helical membrane-spanning segment. Residues 362–369 (FPDNFKAQ) are Extracellular-facing. A helical membrane pass occupies residues 370–393 (VKMVFELVVGSFQGFVVAILYCFL). The Cytoplasmic segment spans residues 394–459 (NGEVQAELRR…SSFQAEVSLV (66 aa)).

It belongs to the G-protein coupled receptor 2 family. As to quaternary structure, interacts with ADCYAP1/PACAP; activated by both PACAP27 and PACAP38 neuropeptides. Interacts with VIP; the interaction results in VIPR1 activation. In terms of tissue distribution, in liver, lung, intestines, thymus and brain (mostly in the cerebral cortex and hippocampus).

It is found in the cell membrane. Functionally, g protein-coupled receptor activated by the neuropeptides vasoactive intestinal peptide (VIP) and pituitary adenylate cyclase-activating polypeptide (ADCYAP1/PACAP). Binds VIP and both PACAP27 and PACAP38 bioactive peptides with the following order of ligand affinity VIP = PACAP27 &gt; PACAP38. Ligand binding causes a conformation change that triggers signaling via guanine nucleotide-binding proteins (G proteins) and modulates the activity of downstream effectors. Activates cAMP-dependent pathway. In Rattus norvegicus (Rat), this protein is Vasoactive intestinal polypeptide receptor 1.